Consider the following 217-residue polypeptide: ATP phosphoribosyltransferase (217 aa).

It belongs to the ATP phosphoribosyltransferase family. Short subfamily. Heteromultimer composed of HisG and HisZ subunits.

It localises to the cytoplasm. It catalyses the reaction 1-(5-phospho-beta-D-ribosyl)-ATP + diphosphate = 5-phospho-alpha-D-ribose 1-diphosphate + ATP. The protein operates within amino-acid biosynthesis; L-histidine biosynthesis; L-histidine from 5-phospho-alpha-D-ribose 1-diphosphate: step 1/9. Functionally, catalyzes the condensation of ATP and 5-phosphoribose 1-diphosphate to form N'-(5'-phosphoribosyl)-ATP (PR-ATP). Has a crucial role in the pathway because the rate of histidine biosynthesis seems to be controlled primarily by regulation of HisG enzymatic activity. This chain is ATP phosphoribosyltransferase, found in Prochlorococcus marinus (strain MIT 9313).